We begin with the raw amino-acid sequence, 61 residues long: Lens epithelial cell protein LEP503 (61 aa).

In Mus musculus (Mouse), this protein is Lens epithelial cell protein LEP503 (Lenep).